Consider the following 183-residue polypeptide: Dual-action ribosomal maturation protein DarP (183 aa).

The protein belongs to the DarP family.

It localises to the cytoplasm. Functionally, member of a network of 50S ribosomal subunit biogenesis factors which assembles along the 30S-50S interface, preventing incorrect 23S rRNA structures from forming. Promotes peptidyl transferase center (PTC) maturation. This is Dual-action ribosomal maturation protein DarP from Klebsiella pneumoniae (strain 342).